Consider the following 306-residue polypeptide: Pantothenate kinase (306 aa).

Gly-91–Ser-98 provides a ligand contact to ATP.

This sequence belongs to the prokaryotic pantothenate kinase family.

The protein localises to the cytoplasm. It carries out the reaction (R)-pantothenate + ATP = (R)-4'-phosphopantothenate + ADP + H(+). It functions in the pathway cofactor biosynthesis; coenzyme A biosynthesis; CoA from (R)-pantothenate: step 1/5. This is Pantothenate kinase from Streptococcus agalactiae serotype Ia (strain ATCC 27591 / A909 / CDC SS700).